The primary structure comprises 141 residues: Hemoglobin subunit alpha (141 aa).

The Globin domain maps to 1-141; that stretch reads VLSSADKNNI…VSTVLTSKYR (141 aa). Residue Ser3 is modified to Phosphoserine. An N6-succinyllysine mark is found at Lys7 and Lys11. Lys16 is subject to N6-acetyllysine; alternate. The residue at position 16 (Lys16) is an N6-succinyllysine; alternate. Phosphotyrosine is present on Tyr24. Ser35 is modified (phosphoserine). Lys40 carries the post-translational modification N6-succinyllysine. At Ser49 the chain carries Phosphoserine. His58 lines the O2 pocket. Heme b is bound at residue His87. Ser102 carries the phosphoserine modification. 3 positions are modified to phosphothreonine: Thr108, Thr134, and Thr137. At Ser138 the chain carries Phosphoserine.

This sequence belongs to the globin family. In terms of assembly, heterotetramer of two alpha chains and two beta chains. In terms of tissue distribution, red blood cells.

Its function is as follows. Involved in oxygen transport from the lung to the various peripheral tissues. Functionally, hemopressin acts as an antagonist peptide of the cannabinoid receptor CNR1. Hemopressin-binding efficiently blocks cannabinoid receptor CNR1 and subsequent signaling. This is Hemoglobin subunit alpha (HBA) from Paguma larvata (Masked palm civet).